The primary structure comprises 427 residues: Light-independent protochlorophyllide reductase subunit N (427 aa).

Positions 28, 53, and 114 each coordinate [4Fe-4S] cluster.

It belongs to the BchN/ChlN family. As to quaternary structure, protochlorophyllide reductase is composed of three subunits; BchL, BchN and BchB. Forms a heterotetramer of two BchB and two BchN subunits. Requires [4Fe-4S] cluster as cofactor.

It carries out the reaction chlorophyllide a + oxidized 2[4Fe-4S]-[ferredoxin] + 2 ADP + 2 phosphate = protochlorophyllide a + reduced 2[4Fe-4S]-[ferredoxin] + 2 ATP + 2 H2O. It functions in the pathway porphyrin-containing compound metabolism; bacteriochlorophyll biosynthesis (light-independent). In terms of biological role, component of the dark-operative protochlorophyllide reductase (DPOR) that uses Mg-ATP and reduced ferredoxin to reduce ring D of protochlorophyllide (Pchlide) to form chlorophyllide a (Chlide). This reaction is light-independent. The NB-protein (BchN-BchB) is the catalytic component of the complex. In Dinoroseobacter shibae (strain DSM 16493 / NCIMB 14021 / DFL 12), this protein is Light-independent protochlorophyllide reductase subunit N.